Consider the following 319-residue polypeptide: Urease accessory protein UreD (319 aa).

Positions 254–273 (PDPVGSPAARRESVPAKRAE) are disordered. Residues 262-273 (ARRESVPAKRAE) show a composition bias toward basic and acidic residues.

The protein belongs to the UreD family. As to quaternary structure, ureD, UreF and UreG form a complex that acts as a GTP-hydrolysis-dependent molecular chaperone, activating the urease apoprotein by helping to assemble the nickel containing metallocenter of UreC. The UreE protein probably delivers the nickel.

Its subcellular location is the cytoplasm. Functionally, required for maturation of urease via the functional incorporation of the urease nickel metallocenter. This Frankia casuarinae (strain DSM 45818 / CECT 9043 / HFP020203 / CcI3) protein is Urease accessory protein UreD.